A 535-amino-acid chain; its full sequence is Isoleucine N-monooxygenase 1 (535 aa).

Residues 1-8 lie on the Cytoplasmic side of the membrane; it reads MGLMPDFL. A helical; Signal-anchor for type II membrane protein transmembrane segment spans residues 9 to 29; it reads SLCHEFPWTFLLVVIFSFMIF. Over 30–535 the chain is Lumenal; sequence KVTKTHLVNK…AAELYRTNEI (506 aa). N-linked (GlcNAc...) asparagine glycans are attached at residues N38, N232, and N404. C470 lines the heme pocket.

Belongs to the cytochrome P450 family. Heme serves as cofactor. In terms of tissue distribution, exclusively expressed in aerial parts. Highest expression in the apical leaves. Also detected in the second leaf from the top and in the stem. Not expressed in older leaves or roots.

The protein localises to the microsome membrane. It carries out the reaction L-isoleucine + 2 reduced [NADPH--hemoprotein reductase] + 2 O2 = (1E,2S)-2-methylbutanal oxime + 2 oxidized [NADPH--hemoprotein reductase] + CO2 + 3 H2O + 2 H(+). The enzyme catalyses L-isoleucine + reduced [NADPH--hemoprotein reductase] + O2 = N-hydroxy-L-isoleucine + oxidized [NADPH--hemoprotein reductase] + H2O + 2 H(+). It catalyses the reaction N-hydroxy-L-isoleucine + reduced [NADPH--hemoprotein reductase] + O2 = N,N-dihydroxy-L-isoleucine + oxidized [NADPH--hemoprotein reductase] + H2O + H(+). The catalysed reaction is L-valine + 2 reduced [NADPH--hemoprotein reductase] + 2 O2 = (E)-2-methylpropanal oxime + 2 oxidized [NADPH--hemoprotein reductase] + CO2 + 3 H2O + 2 H(+). It carries out the reaction L-valine + reduced [NADPH--hemoprotein reductase] + O2 = N-hydroxy-L-valine + oxidized [NADPH--hemoprotein reductase] + H2O + 2 H(+). The enzyme catalyses N-hydroxy-L-valine + reduced [NADPH--hemoprotein reductase] + O2 = N,N-dihydroxy-L-valine + oxidized [NADPH--hemoprotein reductase] + H2O + H(+). It participates in secondary metabolite biosynthesis. In terms of biological role, involved in the biosynthesis of the cyanogenic glucosides linamarin and lotaustralin and of the nitirle glucosides rhodiocyanoside A and D. Can use L-isoleucine &gt; L-valine as substrate, but not L-leucine, L-phenylalanine or L-tyrosine. Catalyzes multi-step reactions starting with two successive N-hydroxylations using L-isoleucine and, to a lower extent, L-valine as substrates leading to the formation of N,N-dihydroxy-L-valine and N,N-dihydroxy-L-isoleucine, respectively; following spontaneous reactions lead to the production of (E)-2-methylpropanal oxime and (1E,2S)-2-methylbutanal oxime, respectively. The chain is Isoleucine N-monooxygenase 1 from Lotus japonicus (Lotus corniculatus var. japonicus).